The following is a 313-amino-acid chain: Short-chain dehydrogenase/reductase family 9C member 7 (313 aa).

Residue 29–53 participates in NADP(+) binding; the sequence is FITGCDSGFGNLLAKQLVDRGMQVL. S160 contacts substrate. Catalysis depends on Y172, which acts as the Proton acceptor. Position 185 is a phosphoserine (S185).

Belongs to the short-chain dehydrogenases/reductases (SDR) family. As to expression, expressed in the skin. Expressed in granular and cornified layers of the epidermis (at protein level). Highly expressed in liver.

Its subcellular location is the cytoplasm. The catalysed reaction is a N-[omega-(9R,10R)-epoxy-(13R)-hydroxy-(11E)-octadecenoyloxy]acyl-beta-D-glucosyl-(1&lt;-&gt;1)-sphing-4E-enine + NAD(+) = a N-[omega-(9R,10R)-epoxy-13-oxo-(11E)-octadecenoyloxy]acyl-beta-D-glucosyl-(1&lt;-&gt;1)-sphing-4E-enine + NADH + H(+). The enzyme catalyses a N-[omega-(9R,10R)-epoxy-(13R)-hydroxy-(11E)-octadecenoyloxy]-acylsphing-4E-enine + NAD(+) = a N-[omega-(9R,10R)-epoxy-13-oxo-(11E)-octadecenoyloxy]-acylsphing-4E-enine + NADH + H(+). Functionally, plays a crucial role in the formation of the epidermal permeability barrier. Catalyzes the NAD+-dependent dehydrogenation of the linoleate 9,10-trans-epoxy-11E-13-alcohol esterified in omega-O-acylceramides (such as in N-[omega-(9R,10R)-epoxy-(13R)-hydroxy-(11E)-octadecenoyloxy]-acylsphing-4E-enine) to the corresponding 13-ketone, the reactive moiety required for binding of epidermal ceramides to proteins. Displays weak conversion of all-trans-retinal to all-trans-retinol in the presence of NADH. Has apparently no steroid dehydrogenase activity. In Homo sapiens (Human), this protein is Short-chain dehydrogenase/reductase family 9C member 7 (SDR9C7).